A 299-amino-acid polypeptide reads, in one-letter code: Probable lipid kinase YegS (299 aa).

The region spanning 2 to 133 (AEFPASLLIL…IDMAQVNKQT (132 aa)) is the DAGKc domain. Residues threonine 40, 66–72 (GDGTINE), and threonine 95 contribute to the ATP site. Leucine 215, aspartate 218, and leucine 220 together coordinate Mg(2+). Glutamate 271 serves as the catalytic Proton acceptor.

It belongs to the diacylglycerol/lipid kinase family. YegS lipid kinase subfamily. Mg(2+) is required as a cofactor. The cofactor is Ca(2+).

It localises to the cytoplasm. Functionally, probably phosphorylates lipids; the in vivo substrate is unknown. The polypeptide is Probable lipid kinase YegS (Shigella boydii serotype 18 (strain CDC 3083-94 / BS512)).